The sequence spans 251 residues: MIELGVNIDHVATLRQARRTWEPDPAWAAMEAHLGGADGITVHLREDRRHIQDEDVRRLRELTQVKLNLEMAATDEMVGIACALRPEMAMLVPEGRHEVTTEGGLDVLAQEGRLKDVVARLADAGIVTSVFIDAELGQVEAAARIGARVCEIHTGPYAHAFHAAGRDPQSAAVVDEIDKVRRAGEAIRALGMRFNAGHALNYYNVQPIARLPEVRELHIGHAIVSRSVFTGLRDAVREMKRLMREAAGVGR.

A 3-amino-2-oxopropyl phosphate-binding site is contributed by Asn-7. Asp-9–His-10 contacts 1-deoxy-D-xylulose 5-phosphate. Arg-18 provides a ligand contact to 3-amino-2-oxopropyl phosphate. Catalysis depends on His-43, which acts as the Proton acceptor. 1-deoxy-D-xylulose 5-phosphate contacts are provided by Arg-45 and His-50. The active-site Proton acceptor is the Glu-70. Residue Thr-100 participates in 1-deoxy-D-xylulose 5-phosphate binding. The active-site Proton donor is the His-198. Residues Ala-199 and Gly-220–His-221 each bind 3-amino-2-oxopropyl phosphate.

This sequence belongs to the PNP synthase family. As to quaternary structure, homooctamer; tetramer of dimers.

Its subcellular location is the cytoplasm. It catalyses the reaction 3-amino-2-oxopropyl phosphate + 1-deoxy-D-xylulose 5-phosphate = pyridoxine 5'-phosphate + phosphate + 2 H2O + H(+). The protein operates within cofactor biosynthesis; pyridoxine 5'-phosphate biosynthesis; pyridoxine 5'-phosphate from D-erythrose 4-phosphate: step 5/5. In terms of biological role, catalyzes the complicated ring closure reaction between the two acyclic compounds 1-deoxy-D-xylulose-5-phosphate (DXP) and 3-amino-2-oxopropyl phosphate (1-amino-acetone-3-phosphate or AAP) to form pyridoxine 5'-phosphate (PNP) and inorganic phosphate. This Aromatoleum aromaticum (strain DSM 19018 / LMG 30748 / EbN1) (Azoarcus sp. (strain EbN1)) protein is Pyridoxine 5'-phosphate synthase.